A 105-amino-acid polypeptide reads, in one-letter code: Large ribosomal subunit protein uL24 (105 aa).

It belongs to the universal ribosomal protein uL24 family. In terms of assembly, part of the 50S ribosomal subunit.

One of two assembly initiator proteins, it binds directly to the 5'-end of the 23S rRNA, where it nucleates assembly of the 50S subunit. Functionally, one of the proteins that surrounds the polypeptide exit tunnel on the outside of the subunit. The chain is Large ribosomal subunit protein uL24 from Beijerinckia indica subsp. indica (strain ATCC 9039 / DSM 1715 / NCIMB 8712).